The primary structure comprises 362 residues: Epoxide hydrolase 4 (362 aa).

Residues Ser-17–Leu-37 form a helical; Signal-anchor for type II membrane protein membrane-spanning segment. The AB hydrolase-1 domain occupies Pro-94–Leu-211. Catalysis depends on Asp-169, which acts as the Nucleophile. Tyr-281 serves as the catalytic Proton donor. The Proton acceptor role is filled by His-336.

This sequence belongs to the AB hydrolase superfamily. Epoxide hydrolase family.

It is found in the membrane. The sequence is that of Epoxide hydrolase 4 (EPHX4) from Homo sapiens (Human).